The sequence spans 181 residues: MTEYVVLVNEQGDAIGTMEKLEAHEKGLLHLAFSVLLYRETDLGKEFLLQKRAECKYHSKNKWSNTCCSHPRVNENVEAAGTRRLNEEIGITGVLPEQFVNLGWFIYQAELENGLSEHEQDYILIANTPDVSFILNPEEVSDIQWWSEADIEKELKANPDTFSVWFPTVYKKVLTHLHQAN.

Positions 24 and 30 each coordinate Mn(2+). One can recognise a Nudix hydrolase domain in the interval 28–168; sequence LLHLAFSVLL…PDTFSVWFPT (141 aa). The active site involves Cys68. His70 contributes to the Mn(2+) binding site. Glu88 is a binding site for Mg(2+). Mn(2+) contacts are provided by Glu117 and Glu119. The active site involves Glu119.

The protein belongs to the IPP isomerase type 1 family. Mg(2+) serves as cofactor. Requires Mn(2+) as cofactor.

It localises to the cytoplasm. The catalysed reaction is isopentenyl diphosphate = dimethylallyl diphosphate. Its pathway is isoprenoid biosynthesis; dimethylallyl diphosphate biosynthesis; dimethylallyl diphosphate from isopentenyl diphosphate: step 1/1. In terms of biological role, catalyzes the 1,3-allylic rearrangement of the homoallylic substrate isopentenyl (IPP) to its highly electrophilic allylic isomer, dimethylallyl diphosphate (DMAPP). The protein is Isopentenyl-diphosphate Delta-isomerase of Aliivibrio fischeri (strain MJ11) (Vibrio fischeri).